Reading from the N-terminus, the 223-residue chain is Ribosome assembly factor mrt4 (223 aa).

This sequence belongs to the universal ribosomal protein uL10 family. As to quaternary structure, associates with the pre-60S ribosomal particle.

Its subcellular location is the nucleus. It is found in the nucleolus. The protein localises to the cytoplasm. Functionally, component of the ribosome assembly machinery. Nuclear paralog of the ribosomal protein P0, it binds pre-60S subunits at an early stage of assembly in the nucleolus, and is replaced by P0 in cytoplasmic pre-60S subunits and mature 80S ribosomes. This Dictyostelium discoideum (Social amoeba) protein is Ribosome assembly factor mrt4.